Here is a 167-residue protein sequence, read N- to C-terminus: Small ribosomal subunit protein uS9 (167 aa).

The disordered stretch occupies residues methionine 1–serine 41. The span at threonine 17–serine 26 shows a compositional bias: polar residues.

Belongs to the universal ribosomal protein uS9 family.

In Renibacterium salmoninarum (strain ATCC 33209 / DSM 20767 / JCM 11484 / NBRC 15589 / NCIMB 2235), this protein is Small ribosomal subunit protein uS9.